The following is a 383-amino-acid chain: Homeobox protein SHOOT MERISTEMLESS (383 aa).

The segment at 37 to 58 is disordered; it reads HQQHHGHDQQHQHQQQHDGYAY. One can recognise an ELK domain in the interval 263-283; that stretch reads ELKGQLLRKYSGYLGSLKQEF. The segment at residues 284–347 is a DNA-binding region (homeobox; TALE-type); it reads MKKRKKGKLP…NQRKRHWKPS (64 aa).

It belongs to the TALE/KNOX homeobox family.

It localises to the nucleus. Its function is as follows. Required for shoot apical meristem formation during embryogenesis. Probably binds to the DNA sequence 5'-TGAC-3'. This chain is Homeobox protein SHOOT MERISTEMLESS (STM), found in Brassica oleracea (Wild cabbage).